A 126-amino-acid chain; its full sequence is MNFPADLKYTKDHEWIRVEGDVAYVGITDYAQGELGEIVYVDITTEGETVAKEEVFGTIEAVKTVSDLFMPVSGEVLEVNAELEDAPELVNEDAYGKGWLIKISLTDASELEELLSAEDYQKLIAK.

A Lipoyl-binding domain is found at 22–104; sequence VAYVGITDYA…YGKGWLIKIS (83 aa). Lys63 carries the post-translational modification N6-lipoyllysine.

It belongs to the GcvH family. In terms of assembly, the glycine cleavage system is composed of four proteins: P, T, L and H. Requires (R)-lipoate as cofactor.

The glycine cleavage system catalyzes the degradation of glycine. The H protein shuttles the methylamine group of glycine from the P protein to the T protein. The sequence is that of Glycine cleavage system H protein from Parabacteroides distasonis (strain ATCC 8503 / DSM 20701 / CIP 104284 / JCM 5825 / NCTC 11152).